A 401-amino-acid chain; its full sequence is S-adenosylmethionine synthase (401 aa).

137-142 serves as a coordination point for ATP; it reads GEGSGD. A disordered region spans residues 272–305; that stretch reads GTSAEQGDDGSVGRGNRSNGLITPNRSMSMEATS. Positions 287–305 are enriched in polar residues; the sequence is NRSNGLITPNRSMSMEATS.

This sequence belongs to the AdoMet synthase 2 family. Requires Mg(2+) as cofactor.

It catalyses the reaction L-methionine + ATP + H2O = S-adenosyl-L-methionine + phosphate + diphosphate. It participates in amino-acid biosynthesis; S-adenosyl-L-methionine biosynthesis; S-adenosyl-L-methionine from L-methionine: step 1/1. In terms of biological role, catalyzes the formation of S-adenosylmethionine from methionine and ATP. This is S-adenosylmethionine synthase from Natronomonas pharaonis (strain ATCC 35678 / DSM 2160 / CIP 103997 / JCM 8858 / NBRC 14720 / NCIMB 2260 / Gabara) (Halobacterium pharaonis).